The following is a 446-amino-acid chain: Ribosomal protein uS12 methylthiotransferase RimO (446 aa).

An MTTase N-terminal domain is found at 9 to 121 (PKVGFVSLGC…VLDAIHAALP (113 aa)). Residues cysteine 18, cysteine 54, cysteine 83, cysteine 152, cysteine 156, and cysteine 159 each contribute to the [4Fe-4S] cluster site. Positions 138-375 (LTPPHYAYLK…MAVQEAISRQ (238 aa)) constitute a Radical SAM core domain. The TRAM domain maps to 378 to 445 (QRRVGQRQRV…AHDLYGMVVS (68 aa)).

This sequence belongs to the methylthiotransferase family. RimO subfamily. It depends on [4Fe-4S] cluster as a cofactor.

It localises to the cytoplasm. The catalysed reaction is L-aspartate(89)-[ribosomal protein uS12]-hydrogen + (sulfur carrier)-SH + AH2 + 2 S-adenosyl-L-methionine = 3-methylsulfanyl-L-aspartate(89)-[ribosomal protein uS12]-hydrogen + (sulfur carrier)-H + 5'-deoxyadenosine + L-methionine + A + S-adenosyl-L-homocysteine + 2 H(+). Catalyzes the methylthiolation of an aspartic acid residue of ribosomal protein uS12. The protein is Ribosomal protein uS12 methylthiotransferase RimO of Acidithiobacillus ferrooxidans (strain ATCC 23270 / DSM 14882 / CIP 104768 / NCIMB 8455) (Ferrobacillus ferrooxidans (strain ATCC 23270)).